The sequence spans 266 residues: 3-methyl-2-oxobutanoate hydroxymethyltransferase (266 aa).

Mg(2+) is bound by residues D45 and D84. Residues 45–46 (DS), D84, and K112 contribute to the 3-methyl-2-oxobutanoate site. E114 provides a ligand contact to Mg(2+). E181 (proton acceptor) is an active-site residue.

Belongs to the PanB family. In terms of assembly, homodecamer; pentamer of dimers. It depends on Mg(2+) as a cofactor.

It localises to the cytoplasm. The catalysed reaction is 3-methyl-2-oxobutanoate + (6R)-5,10-methylene-5,6,7,8-tetrahydrofolate + H2O = 2-dehydropantoate + (6S)-5,6,7,8-tetrahydrofolate. Its pathway is cofactor biosynthesis; (R)-pantothenate biosynthesis; (R)-pantoate from 3-methyl-2-oxobutanoate: step 1/2. Catalyzes the reversible reaction in which hydroxymethyl group from 5,10-methylenetetrahydrofolate is transferred onto alpha-ketoisovalerate to form ketopantoate. This chain is 3-methyl-2-oxobutanoate hydroxymethyltransferase, found in Pseudomonas syringae pv. syringae (strain B728a).